The primary structure comprises 145 residues: Antiholin-like protein LrgA (145 aa).

Transmembrane regions (helical) follow at residues 13–30 (FFHQ…SKII), 40–62 (GSVI…LGEV), 69–91 (LTNN…LGVI), and 95–117 (PFLI…GYVT).

It belongs to the CidA/LrgA family. LrgA subfamily.

It localises to the cell membrane. In terms of biological role, inhibits the expression or activity of extracellular murein hydrolases by interacting, possibly with LrgB, with the holin-like proteins CidA and/or CidB. The LrgAB and CidAB proteins may affect the proton motive force of the membrane. May be involved in programmed cell death (PCD), possibly triggering PCD in response to antibiotics and environmental stresses. This is Antiholin-like protein LrgA from Staphylococcus aureus (strain MW2).